We begin with the raw amino-acid sequence, 340 residues long: Protein arginine N-methyltransferase 1 (340 aa).

Positions 16–311 (KDYYFDSYSH…TCKPAEGNHR (296 aa)) constitute an SAM-dependent MTase PRMT-type domain. Residue Y19 is modified to Phosphotyrosine. H29, R38, G62, D84, and E113 together coordinate S-adenosyl-L-methionine. Residues E128 and E137 contribute to the active site. A Phosphoserine modification is found at S176.

It belongs to the class I-like SAM-binding methyltransferase superfamily. Protein arginine N-methyltransferase family. In terms of assembly, interacts with pab2.

It is found in the nucleus. It catalyses the reaction L-arginyl-[protein] + S-adenosyl-L-methionine = N(omega)-methyl-L-arginyl-[protein] + S-adenosyl-L-homocysteine + H(+). It carries out the reaction L-arginyl-[protein] + 2 S-adenosyl-L-methionine = N(omega),N(omega)-dimethyl-L-arginyl-[protein] + 2 S-adenosyl-L-homocysteine + 2 H(+). Functionally, S-adenosyl-L-methionine-dependent protein-arginine N-methyltransferase that catalyzes both the mono- and asymmetric (type I) dimethylation of the guanidino nitrogens of arginine residues in target proteins. Asymmetrically dimethylates the polyadenylate-binding protein pab2, modulating pab2 oligomerization. In Schizosaccharomyces pombe (strain 972 / ATCC 24843) (Fission yeast), this protein is Protein arginine N-methyltransferase 1.